A 354-amino-acid chain; its full sequence is 2-methylisoborneol synthase (354 aa).

The tract at residues 1–29 (MIELIGHETPVPSQQQHTGGVRGTSACTP) is disordered. Mg(2+)-binding residues include D113, D114, E118, N264, S268, and E272.

It belongs to the terpene synthase family. 2-methylisoborneol synthase subfamily. It depends on Mg(2+) as a cofactor.

The enzyme catalyses (E)-2-methylgeranyl diphosphate + H2O = 2-methylisoborneol + diphosphate. In terms of biological role, catalyzes the cyclization of 2-methylgeranyl diphosphate (2-MeGPP) to 2-methylisoborneol (2-MIB), which likely involves the intermediacy of 2-methyllinalyl diphosphate. This Saccharopolyspora erythraea (strain ATCC 11635 / DSM 40517 / JCM 4748 / NBRC 13426 / NCIMB 8594 / NRRL 2338) protein is 2-methylisoborneol synthase.